The sequence spans 82 residues: Large ribosomal subunit protein uL23 (82 aa).

Belongs to the universal ribosomal protein uL23 family. Part of the 50S ribosomal subunit. Contacts protein L29.

Functionally, binds to 23S rRNA. One of the proteins that surrounds the polypeptide exit tunnel on the outside of the ribosome. This is Large ribosomal subunit protein uL23 from Sulfurisphaera tokodaii (strain DSM 16993 / JCM 10545 / NBRC 100140 / 7) (Sulfolobus tokodaii).